A 316-amino-acid polypeptide reads, in one-letter code: MALLDDVKSELAAFEGDSPAAIKAQAAAMIRFGGGLRPVQNTYVIQAVFTSLDVAEWLKNTLRNTFGHEAEINHLTRQTPNGPVETYVVLVTRNVVALALQTGLVDRRKQQVRGLPSEVVNGSIAQIKAAWRGAFMARGFLSDPGKASFLEIACPTEEAAMALCGVARRLGIQAKHRTLRSSERVTLKDPDAIERMLKLMGATRSAREWTGKRSDGEARGKANRLANFDDANMRRSAKAAAEASEKVQHAFEVLGDNIPDNLRQAGQLRIDHVDKSLEELGKIAEPQITKDAIAGRIRRLLQLAEKTEKARAAEGK.

Residues 276 to 309 (SLEELGKIAEPQITKDAIAGRIRRLLQLAEKTEK) constitute a DNA-binding region (H-T-H motif).

The protein belongs to the WhiA family.

In terms of biological role, involved in cell division and chromosome segregation. The sequence is that of Probable cell division protein WhiA from Bifidobacterium longum subsp. infantis (strain ATCC 15697 / DSM 20088 / JCM 1222 / NCTC 11817 / S12).